We begin with the raw amino-acid sequence, 240 residues long: Probable phosphatase Athe_0620 (240 aa).

Zn(2+)-binding residues include histidine 8, histidine 10, histidine 16, histidine 41, glutamate 74, histidine 102, histidine 132, aspartate 192, and histidine 194.

The protein belongs to the PHP family. It depends on Zn(2+) as a cofactor.

The protein is Probable phosphatase Athe_0620 of Caldicellulosiruptor bescii (strain ATCC BAA-1888 / DSM 6725 / KCTC 15123 / Z-1320) (Anaerocellum thermophilum).